Reading from the N-terminus, the 290-residue chain is Shikimate dehydrogenase (NADP(+)) (290 aa).

Shikimate is bound by residues S22 to S24 and T68. K72 serves as the catalytic Proton acceptor. D84 is a binding site for NADP(+). 2 residues coordinate shikimate: N93 and D108. Residues G133–S137 and I228 contribute to the NADP(+) site. Y230 is a binding site for shikimate. G251 contributes to the NADP(+) binding site.

It belongs to the shikimate dehydrogenase family. As to quaternary structure, homodimer.

The enzyme catalyses shikimate + NADP(+) = 3-dehydroshikimate + NADPH + H(+). Its pathway is metabolic intermediate biosynthesis; chorismate biosynthesis; chorismate from D-erythrose 4-phosphate and phosphoenolpyruvate: step 4/7. Its function is as follows. Involved in the biosynthesis of the chorismate, which leads to the biosynthesis of aromatic amino acids. Catalyzes the reversible NADPH linked reduction of 3-dehydroshikimate (DHSA) to yield shikimate (SA). The protein is Shikimate dehydrogenase (NADP(+)) of Leptospira interrogans serogroup Icterohaemorrhagiae serovar Lai (strain 56601).